The sequence spans 20 residues: Dahlein-5.1 (20 aa).

As to expression, expressed by the skin dorsal glands.

Its subcellular location is the secreted. In terms of biological role, has no antimicrobial activity. Strongly inhibits the formation of NO by neuronal nitric oxide synthase at micromolar concentrations. Acts by a non-competitive mechanism, probably by binding to calcium/calmodulin and as a consequence blocking calmodulin attachment to nNOS. The sequence is that of Dahlein-5.1 from Ranoidea dahlii (Dahl's aquatic frog).